A 211-amino-acid polypeptide reads, in one-letter code: Molybdenum cofactor guanylyltransferase (211 aa).

GTP contacts are provided by residues Leu-12–Gly-14, Lys-25, Asn-55, Asp-73, and Asp-103. Asp-103 contributes to the Mg(2+) binding site.

Belongs to the MobA family. As to quaternary structure, monomer. Requires Mg(2+) as cofactor.

It is found in the cytoplasm. It catalyses the reaction Mo-molybdopterin + GTP + H(+) = Mo-molybdopterin guanine dinucleotide + diphosphate. Functionally, transfers a GMP moiety from GTP to Mo-molybdopterin (Mo-MPT) cofactor (Moco or molybdenum cofactor) to form Mo-molybdopterin guanine dinucleotide (Mo-MGD) cofactor. The polypeptide is Molybdenum cofactor guanylyltransferase (Albidiferax ferrireducens (strain ATCC BAA-621 / DSM 15236 / T118) (Rhodoferax ferrireducens)).